We begin with the raw amino-acid sequence, 115 residues long: Nucleoid-associated protein alr5067 (115 aa).

The protein belongs to the YbaB/EbfC family. Homodimer.

Its subcellular location is the cytoplasm. It localises to the nucleoid. Functionally, binds to DNA and alters its conformation. May be involved in regulation of gene expression, nucleoid organization and DNA protection. The sequence is that of Nucleoid-associated protein alr5067 from Nostoc sp. (strain PCC 7120 / SAG 25.82 / UTEX 2576).